The primary structure comprises 631 residues: 30-kDa cleavage and polyadenylation specificity factor 30 (631 aa).

The segment at 12–38 (EGGLDSGPVQNTASVPVAPPENSSSAA) is disordered. 3 consecutive C3H1-type zinc fingers follow at residues 60–87 (SFRQ…HQFD), 88–112 (KARM…VYKH), and 114–141 (NEDI…HAKL). A disordered region spans residues 179-234 (QDRPQGQVPMQGQPQESGNLQQQQQQQPQQSQHQVSQTLIPNPADQTNRTSHPLPQ). Residues 182 to 215 (PQGQVPMQGQPQESGNLQQQQQQQPQQSQHQVSQ) are compositionally biased toward low complexity. Over residues 216-231 (TLIPNPADQTNRTSHP) the composition is skewed to polar residues. Residues 237 to 372 (NRYFVVKSNN…SVGEQLASLL (136 aa)) enclose the YTH domain. Basic and acidic residues predominate over residues 392–407 (EEEKAKGVNPESRAEN). Disordered stretches follow at residues 392–447 (EEEK…RGIM) and 541–631 (PHMG…KKRR). A compositionally biased stretch (acidic residues) spans 412-432 (PFEDNEEEEEEEDESEEEEES). The span at 573 to 583 (KTPERSDERGV) shows a compositional bias: basic and acidic residues. Serine 610 and serine 612 each carry phosphoserine. Residues 621 to 631 (RSRHGEGKKRR) show a composition bias toward basic residues.

The protein belongs to the CPSF4/YTH1 family. In terms of assembly, component of the cleavage and polyadenylation specificity factor (CPSF) complex. Can form homodimers. Binds to calmodulin. Forms a complex with cleavage and polyadenylation specificity factor (CPSF) subunits CPSF73-I, CPSF73-II, CPSF100, CPSF160, CFIS2, FIPS3, FIPS5, PAPS2, PAPS3, CLPS3, PCFS1, PCFS4, CSTF50 and CSTF77. As to expression, expressed in seedlings, roots, leaves, siliques, stems and flowers.

The protein localises to the nucleus. Its subcellular location is the cytoplasm. Its activity is regulated as follows. Endonuclease activity is repressed by the N-terminal domain of FIPS5. Nuclease activity is inhibited by zinc (&gt;100 uM), cadmium in a progressive manner (50 percent activity at 1 mM Cd(2+)), and high salt levels (e.g. KCl or NaCl &gt;600 mM). Stimulated by ATP in the presence of Zn(2+), even at inhibitory zinc concentrations. Elevated temperatures prevent RNA-binding at 55 degrees Celsius, but endonuclease activity at 70 degrees Celsius. The sulfhydryl reagent dithiothreitol (DTT) inhibits both RNA-binding and nuclease activities. Component of the cleavage and polyadenylation specificity factor (CPSF) complex that play a key role in pre-mRNA 3'-end formation. May interact with poly(A) polymerase and other factors to bring about cleavage and poly(A) addition. Mediates poly(A) site selection. Binds RNA in a calcium-dependent manner. Exhibits endonuclease activity with an ability to nick and degrade linear as well as circular single-stranded RNA that leaves RNA 3' ends with hydroxyl groups, thus mediating processing of the pre-mRNA as a prelude to the polyadenylation. Involved in the post-transcriptional control, probably via poly(A) addition, of the responses of plants to stress, especially genes mediating tolerance to oxidative stress. Plays a role in the regulation of salicylic acid (SA) production via the control of messenger RNA 3' end processing, thus being a key component of programmed cell death and plant immune responses required for resistance to virulent Pseudomonas syringae pv tomato DC3000 (Pst). This chain is 30-kDa cleavage and polyadenylation specificity factor 30, found in Arabidopsis thaliana (Mouse-ear cress).